A 278-amino-acid polypeptide reads, in one-letter code: Msm operon regulatory protein (278 aa).

Positions 176 to 274 (NQVKKIIHSQ…GKSPSKFRKE (99 aa)) constitute an HTH araC/xylS-type domain. 2 DNA-binding regions (H-T-H motif) span residues 193-214 (NDIA…RKST) and 241-264 (IAEI…KNYF).

Its function is as follows. Regulatory protein for the msm operon for multiple sugar metabolism. Activates the transcription of the msmEFGK, aga, dexB and gftA genes. This chain is Msm operon regulatory protein (msmR), found in Streptococcus mutans serotype c (strain ATCC 700610 / UA159).